A 133-amino-acid polypeptide reads, in one-letter code: ATP synthase epsilon chain, chloroplastic (133 aa).

This sequence belongs to the ATPase epsilon chain family. In terms of assembly, F-type ATPases have 2 components, CF(1) - the catalytic core - and CF(0) - the membrane proton channel. CF(1) has five subunits: alpha(3), beta(3), gamma(1), delta(1), epsilon(1). CF(0) has three main subunits: a, b and c.

Its subcellular location is the plastid. It localises to the chloroplast thylakoid membrane. In terms of biological role, produces ATP from ADP in the presence of a proton gradient across the membrane. The sequence is that of ATP synthase epsilon chain, chloroplastic from Eucalyptus globulus subsp. globulus (Tasmanian blue gum).